We begin with the raw amino-acid sequence, 146 residues long: Large-conductance mechanosensitive channel (146 aa).

3 consecutive transmembrane segments (helical) span residues 21–41, 44–64, and 83–103; these read VGIIIGAAFTGIVSSLVADLI, IIGLITGGIDFSNLFVNLGDG, and GSFITAVINFLIIAWVVFLLV.

This sequence belongs to the MscL family. In terms of assembly, homopentamer.

Its subcellular location is the cell inner membrane. In terms of biological role, channel that opens in response to stretch forces in the membrane lipid bilayer. May participate in the regulation of osmotic pressure changes within the cell. This chain is Large-conductance mechanosensitive channel, found in Cereibacter sphaeroides (strain ATCC 17023 / DSM 158 / JCM 6121 / CCUG 31486 / LMG 2827 / NBRC 12203 / NCIMB 8253 / ATH 2.4.1.) (Rhodobacter sphaeroides).